The chain runs to 328 residues: Naphthalene 1,2-dioxygenase system ferredoxin--NAD(P)(+), reductase component (328 aa).

Residues 1 to 89 (MELLIQPNNR…NCAIEVPEAD (89 aa)) form the 2Fe-2S ferredoxin-type domain. Positions 35, 40, 43, and 73 each coordinate [2Fe-2S] cluster. The FAD-binding FR-type domain occupies 96 to 193 (ARIIKGTVVA…SGPLGTAYLR (98 aa)).

It belongs to the bacterial ring-hydroxylating dioxygenase ferredoxin reductase component family. As to quaternary structure, the naphthalene dioxygenase (NDO) multicomponent enzyme system is composed of an electron transfer component and a dioxygenase component (iron sulfur protein (ISP)). The electron transfer component is composed of a ferredoxin reductase (NdoR) and a ferredoxin (NdoA), and the dioxygenase component is formed of a heterohexamer (trimer of heterodimers) of three large alpha subunits (NdoB) and three small beta subunits (NdoC). [2Fe-2S] cluster is required as a cofactor. FAD serves as cofactor.

It carries out the reaction 2 reduced [2Fe-2S]-[ferredoxin] + NAD(+) + H(+) = 2 oxidized [2Fe-2S]-[ferredoxin] + NADH. It catalyses the reaction 2 reduced [2Fe-2S]-[ferredoxin] + NADP(+) + H(+) = 2 oxidized [2Fe-2S]-[ferredoxin] + NADPH. Its pathway is aromatic compound metabolism; naphthalene degradation. Strongly inhibited by p-chloromercuribenzoate. Also inhibited by N-ethylmaleimide and o-phenanthroline. In terms of biological role, component of the naphthalene dioxygenase (NDO) multicomponent enzyme system which catalyzes the incorporation of both atoms of molecular oxygen into naphthalene to form cis-(1R,2S)-dihydroxy-1,2-dihydronaphthalene. Ferredoxin reductase catalyzes the transfer of electrons from NADH to ferredoxin (NdoA). NADPH is also effective but yields only 39% of the activity obtained with NADH. Also able to catalyze the cis-dihydroxylation of biphenyl and phenanthrene. The chain is Naphthalene 1,2-dioxygenase system ferredoxin--NAD(P)(+), reductase component (ndoR) from Pseudomonas putida (Arthrobacter siderocapsulatus).